A 95-amino-acid chain; its full sequence is Large ribosomal subunit protein uL23 (95 aa).

The protein belongs to the universal ribosomal protein uL23 family. In terms of assembly, part of the 50S ribosomal subunit. Contacts protein L29, and trigger factor when it is bound to the ribosome.

Functionally, one of the early assembly proteins it binds 23S rRNA. One of the proteins that surrounds the polypeptide exit tunnel on the outside of the ribosome. Forms the main docking site for trigger factor binding to the ribosome. This is Large ribosomal subunit protein uL23 from Desulfatibacillum aliphaticivorans.